Here is a 500-residue protein sequence, read N- to C-terminus: NAD(P)H-quinone oxidoreductase chain 4, chloroplastic (500 aa).

Transmembrane regions (helical) follow at residues 4-24 (FPWL…LFFF), 37-57 (ICIC…HFEL), 87-107 (IGPI…AWPV), 113-130 (LFYF…GSFS), 134-154 (LLLF…LLSM), 167-187 (FILY…GIGL), 207-227 (IALE…KSPI), 242-262 (HYST…YGLV), 272-292 (AHSI…IYAA), 305-325 (IAYS…SISD), 330-350 (GAIL…FLAG), 364-384 (MGGL…LSMA), 386-406 (LALP…GIIT), 417-437 (VITL…LSML), and 463-483 (FVAI…DFVF).

It belongs to the complex I subunit 4 family.

Its subcellular location is the plastid. The protein resides in the chloroplast thylakoid membrane. The enzyme catalyses a plastoquinone + NADH + (n+1) H(+)(in) = a plastoquinol + NAD(+) + n H(+)(out). It catalyses the reaction a plastoquinone + NADPH + (n+1) H(+)(in) = a plastoquinol + NADP(+) + n H(+)(out). The chain is NAD(P)H-quinone oxidoreductase chain 4, chloroplastic from Cucumis sativus (Cucumber).